The following is a 395-amino-acid chain: tRNA-specific 2-thiouridylase MnmA (395 aa).

Residues 7–14 (GLSGGVDS) and M33 contribute to the ATP site. Residues 95–97 (NPD) form an interaction with target base in tRNA region. Residue C100 is the Nucleophile of the active site. C100 and C200 are joined by a disulfide. G124 is an ATP binding site. Residues 150–152 (KDQ) form an interaction with tRNA region. C200 serves as the catalytic Cysteine persulfide intermediate. The tract at residues 346–347 (RY) is interaction with tRNA.

The protein belongs to the MnmA/TRMU family.

It localises to the cytoplasm. The catalysed reaction is S-sulfanyl-L-cysteinyl-[protein] + uridine(34) in tRNA + AH2 + ATP = 2-thiouridine(34) in tRNA + L-cysteinyl-[protein] + A + AMP + diphosphate + H(+). Its function is as follows. Catalyzes the 2-thiolation of uridine at the wobble position (U34) of tRNA, leading to the formation of s(2)U34. The polypeptide is tRNA-specific 2-thiouridylase MnmA (Flavobacterium johnsoniae (strain ATCC 17061 / DSM 2064 / JCM 8514 / BCRC 14874 / CCUG 350202 / NBRC 14942 / NCIMB 11054 / UW101) (Cytophaga johnsonae)).